An 872-amino-acid chain; its full sequence is Metabotropic glutamate receptor 2 (872 aa).

The N-terminal stretch at 1–18 (MESLLRFLALLLLRGAVA) is a signal peptide. Residues 19 to 568 (EGPAKKVLTL…EYIRWGDAWA (550 aa)) are Extracellular-facing. An intrachain disulfide couples cysteine 50 to cysteine 92. L-glutamate contacts are provided by arginine 57, arginine 61, serine 145, alanine 166, and threonine 168. 2 N-linked (GlcNAc...) asparagine glycosylation sites follow: asparagine 203 and asparagine 286. 7 cysteine pairs are disulfide-bonded: cysteine 234-cysteine 518, cysteine 355-cysteine 362, cysteine 400-cysteine 407, cysteine 500-cysteine 519, cysteine 504-cysteine 522, cysteine 525-cysteine 537, and cysteine 540-cysteine 553. L-glutamate is bound at residue aspartate 295. N-linked (GlcNAc...) asparagine glycosylation is present at asparagine 338. Position 377 (lysine 377) interacts with L-glutamate. Asparagine 402 carries N-linked (GlcNAc...) asparagine glycosylation. Residue asparagine 547 is glycosylated (N-linked (GlcNAc...) asparagine). A helical membrane pass occupies residues 569–589 (VGPVTIACLGALATLFVLGVF). Over 590–604 (VRHNATPVVKASGRE) the chain is Cytoplasmic. A helical transmembrane segment spans residues 605–625 (LCYILLGGVFLCYCMTFIFIA). Topologically, residues 626-633 (KPSTAVCT) are extracellular. Cysteine 632 and cysteine 721 are joined by a disulfide. The helical transmembrane segment at 634–651 (LRRLGLGTAFSVCYSALL) threads the bilayer. Residues 652 to 679 (TKTNRIARIFGGAREGAQRPRFISPASQ) lie on the Cytoplasmic side of the membrane. Residues 677 to 685 (ASQVAICLA) are important for interaction with HTR2A. A helical transmembrane segment spans residues 680–700 (VAICLALISGQLLIVAAWLVV). Topologically, residues 701–726 (EAPGIGKETAPERREVVTLRCNHRDA) are extracellular. Residues 727-747 (SMLGSLAYNVLLIALCTLYAF) form a helical membrane-spanning segment. At 748–760 (KTRKCPENFNEAK) the chain is on the cytoplasmic side. The helical transmembrane segment at 761 to 781 (FIGFTMYTTCIIWLAFLPIFY) threads the bilayer. Topologically, residues 782–798 (VTSSDYRVQTTTMCVSV) are extracellular. A helical transmembrane segment spans residues 799-819 (SLSGSVVLGCLFAPKLHIILF). The Cytoplasmic segment spans residues 820–872 (QPQKNVVSHRAPTSRFGSAAPRASANLGQGSGSQLVPTVCNGREVVDSTTSSL).

It belongs to the G-protein coupled receptor 3 family. As to quaternary structure, forms heterodimers with GRM3 or GRM4. Interacts with GNAI1. Interacts with TAMALIN. Interacts with HTR2A. Detected in neurons in brain cortex (at protein level).

The protein localises to the cell membrane. It is found in the synapse. It localises to the cell projection. The protein resides in the dendrite. Its function is as follows. Dimeric G protein-coupled receptor which is activated by the excitatory neurotransmitter L-glutamate. Plays critical roles in modulating synaptic transmission and neuronal excitability. Upon activation by glutamate, inhibits presynaptic calcium channels, reducing further glutamate release and dampening excitatory signaling. Mechanistically, ligand binding causes a conformation change that triggers signaling via guanine nucleotide-binding proteins (G proteins) and modulates the activity of down-stream effectors, such as adenylate cyclase. May mediate suppression of neurotransmission or may be involved in synaptogenesis or synaptic stabilization. This is Metabotropic glutamate receptor 2 (Grm2) from Mus musculus (Mouse).